A 220-amino-acid chain; its full sequence is Uracil-DNA glycosylase (220 aa).

The Proton acceptor role is filled by Asp65.

It belongs to the uracil-DNA glycosylase (UDG) superfamily. UNG family.

Its subcellular location is the cytoplasm. It carries out the reaction Hydrolyzes single-stranded DNA or mismatched double-stranded DNA and polynucleotides, releasing free uracil.. Its function is as follows. Excises uracil residues from the DNA which can arise as a result of misincorporation of dUMP residues by DNA polymerase or due to deamination of cytosine. This chain is Uracil-DNA glycosylase, found in Azobacteroides pseudotrichonymphae genomovar. CFP2.